The sequence spans 50 residues: uncharacterized protein (50 aa).

A helical membrane pass occupies residues 10–29 (LFFYYPFFIIFLYIYLVFFI).

The protein localises to the plastid. It is found in the chloroplast membrane. This is an uncharacterized protein from Marchantia polymorpha (Common liverwort).